A 419-amino-acid chain; its full sequence is NF-kappa-B essential modulator (419 aa).

Positions 1–197 are required for interaction with and ubiquitination by MARCHF2; that stretch reads MNRHLWKSQL…REALQQQHSV (197 aa). Residues Ser31 and Ser43 each carry the phosphoserine; by IKKB modification. The tract at residues 44–111 is interaction with CHUK/IKBKB; it reads EQGAPETLQR…KLVERLGLEK (68 aa). Residues 49–356 are a coiled coil; it reads ETLQRCLEEN…CQESARIEDM (308 aa). At Ser68 the chain carries Phosphoserine. The residue at position 85 (Ser85) is a Phosphoserine; by ATM. Residues Lys111, Lys139, Lys143, Lys226, Lys246, and Lys264 each participate in a glycyl lysine isopeptide (Lys-Gly) (interchain with G-Cter in ubiquitin) cross-link. The tract at residues 150-257 is interaction with TANK; sequence LGELQESQSR…SVVGSERKRG (108 aa). The ubiquitin-binding (UBAN) stretch occupies residues 242-350; that stretch reads DNHIKSSVVG…SKLKASCQES (109 aa). Positions 246-365 are self-association; the sequence is KSSVVGSERK…MRKRHVEVSQ (120 aa). Positions 251–419 are required for interaction with TNFAIP3; sequence GSERKRGMQL…LQIHVMECIE (169 aa). Lys277 participates in a covalent cross-link: Glycyl lysine isopeptide (Lys-Gly) (interchain with G-Cter in SUMO); alternate. Lys277 is covalently cross-linked (Glycyl lysine isopeptide (Lys-Gly) (interchain with G-Cter in ubiquitin); alternate). Glycyl lysine isopeptide (Lys-Gly) (interchain with G-Cter in ubiquitin) cross-links involve residues Lys283, Lys285, Lys292, and Lys302. Lys309 participates in a covalent cross-link: Glycyl lysine isopeptide (Lys-Gly) (interchain with G-Cter in SUMO); alternate. Lys309 is covalently cross-linked (Glycyl lysine isopeptide (Lys-Gly) (interchain with G-Cter in ubiquitin); alternate). Residues Lys321 and Lys325 each participate in a glycyl lysine isopeptide (Lys-Gly) (interchain with G-Cter in ubiquitin) cross-link. The interval 322 to 343 is leucine-zipper; the sequence is LAEKKELLQEQLEQLQREYSKL. Lys326 is covalently cross-linked (Glycyl lysine isopeptide (Lys-Gly) (interchain with G-Cter in ubiquitin and interchain with MARCHF2)). Residues 358–395 are disordered; that stretch reads KRHVEVSQAPLPPAPAYLSSPLALPSQRRSPPEEPPDF. A compositionally biased stretch (low complexity) spans 373 to 386; sequence AYLSSPLALPSQRR. Ser376 carries the post-translational modification Phosphoserine; by IKKB. Residues 382-419 form an interaction with CYLD region; the sequence is PSQRRSPPEEPPDFCCPKCQYQAPDMDTLQIHVMECIE. Ser387 is subject to Phosphoserine. The CCHC NOA-type zinc finger occupies 389-419; it reads PEEPPDFCCPKCQYQAPDMDTLQIHVMECIE. Cys397 contributes to the Zn(2+) binding site. Residue Lys399 forms a Glycyl lysine isopeptide (Lys-Gly) (interchain with G-Cter in ubiquitin) linkage. Residues Cys400, His413, and Cys417 each coordinate Zn(2+).

As to quaternary structure, homodimer; disulfide-linked. Component of the I-kappa-B-kinase (IKK) core complex consisting of CHUK, IKBKB and IKBKG; probably four alpha/CHUK-beta/IKBKB dimers are associated with four gamma/IKBKG subunits. The IKK core complex seems to associate with regulatory or adapter proteins to form a IKK-signalosome holo-complex. The IKK complex associates with TERF2IP/RAP1, leading to promote IKK-mediated phosphorylation of RELA/p65. Part of a complex composed of NCOA2, NCOA3, CHUK/IKKA, IKBKB, IKBKG and CREBBP. Interacts with COPS3, CYLD, NALP2, TRPC4AP and PIDD1. Interacts with ATM; the complex is exported from the nucleus. Interacts with TRAF6. Interacts with IKBKE. Interacts with TANK; the interaction is enhanced by IKBKE and TBK1. Part of a ternary complex consisting of TANK, IKBKB and IKBKG. Interacts with ZFAND5. Interacts with RIPK2. Interacts with TNIP1 and TNFAIP3; TNIP1 facilitates the TNFAIP3-mediated de-ubiquitination of IKBKG. Interacts with TNFAIP3; the interaction is induced by TNF stimulation and by polyubiquitin. Binds (via UBAN region) polyubiquitin; binds both 'Lys-63'-linked and linear polyubiquitin, with higher affinity for linear ubiquitin. Interacts with NLRP10. Interacts with TANK; this interaction increases in response to DNA damage. Interacts with USP10; this interaction increases in response to DNA damage. Interacts with ZC3H12A; this interaction increases in response to DNA damage. Interacts with IFIT5; the interaction synergizes the recruitment of IKK to MAP3K7 and enhances IKK phosphorylation. Interacts with TRIM29; this interaction induces IKBKG/NEMO ubiquitination and proteolytic degradation. Interacts with TRIM13; this interaction leads to IKBKG/NEMO ubiquitination. Interacts with ARFIP2. Interacts with RIPK1. Interacts with (ubiquitinated) BCL10; interaction with polyubiquitinated BCL10 via both 'Lys-63'-linked and linear ubiquitin is required for TCR-induced NF-kappa-B activation. Interacts with MARCHF2; during the late stages of macrophage viral and bacterial infection; the interaction leads to ubiquitination and degradation of IKBKG/NEMO. In terms of assembly, (Microbial infection) Interacts with Molluscum contagiosum virus protein MC005; this interaction inhibits NF-kappa-B activation. (Microbial infection) Interacts with HTLV-1 Tax oncoprotein; the interaction activates IKBKG. As to quaternary structure, (Microbial infection) Interacts with Shigella flexneri ipah9.8; the interaction promotes TNIP1-dependent 'Lys-27'-linked polyubiquitination of IKBKG which perturbs NF-kappa-B activation during bacterial infection. In terms of assembly, (Microbial infection) Interacts with SARS coronavirus-2/SARS-CoV-2 virus protein ORF9B (via N-terminus); the interaction inhibits polyubiquitination through 'Lys-63' and NF-kappa-B activation. Phosphorylation at Ser-68 attenuates aminoterminal homodimerization. In terms of processing, polyubiquitinated on Lys-285 via 'Lys-63'-linked ubiquitin; the ubiquitination is mediated downstream of NOD2 and RIPK2 and probably plays a role in signaling by facilitating interactions with ubiquitin domain-containing proteins and activates the NF-kappa-B pathway. Polyubiquitinated on Lys-285 and Lys-399 through 'Lys-63'-linked ubiquitin; the ubiquitination is mediated by BCL10, MALT1 and TRAF6 and probably plays a role in signaling by facilitating interactions with ubiquitin domain-containing proteins and activates the NF-kappa-B pathway. Monoubiquitinated on Lys-277 and Lys-309; promotes nuclear export. Polyubiquitinated through 'Lys-27' by TRIM23; involved in antiviral innate and inflammatory responses. Linear polyubiquitinated on Lys-111, Lys-143, Lys-226, Lys-246, Lys-264, Lys-277, Lys-285, Lys-292, Lys-302, Lys-309 and Lys-326; the head-to-tail polyubiquitination is mediated by the LUBAC complex and plays a key role in NF-kappa-B activation. Deubiquitinated by USP10 in a TANK-dependent and -independent manner, leading to the negative regulation of NF-kappa-B signaling upon DNA damage. Ubiquitinated at Lys-326 by MARCHF2 following bacterial and viral infection which leads to its degradation. Polyubiquitinated via 'Lys-29'-linked ubiquitin; leading to lysosomal degradation. Post-translationally, sumoylated on Lys-277 and Lys-309 with SUMO1; the modification results in phosphorylation of Ser-85 by ATM leading to a replacement of the sumoylation by mono-ubiquitination on these residues. Neddylated by TRIM40, resulting in stabilization of NFKBIA and down-regulation of NF-kappa-B activity. In terms of processing, (Microbial infection) Cleaved by hepatitis A virus (HAV) protease 3C allowing the virus to disrupt the host innate immune signaling. Post-translationally, (Microbial infection) Deubiquitinated by Epstein-Barr virus BPLF1 on both 'Lys-48' and 'Lys-63'-linked ubiquitin chains; leading to NF-kappa-B signaling inhibition. (Microbial infection) Polyubiquitinated on Lys-309 and Lys-321 via 'Lys-27'-linked ubiquitin by Shigella flexneri E3 ubiquitin-protein ligase ipah9.8, leading to its degradation by the proteasome. In terms of processing, (Microbial infection) Polyubiquitination through 'Lys-63' is interrupted by interaction with SARS coronavirus-2/SARS-CoV-2 virus protein ORF9B which inhibits the NF-kappa-B pathway. In terms of tissue distribution, heart, brain, placenta, lung, liver, skeletal muscle, kidney and pancreas.

It localises to the cytoplasm. Its subcellular location is the nucleus. Its function is as follows. Regulatory subunit of the IKK core complex which phosphorylates inhibitors of NF-kappa-B thus leading to the dissociation of the inhibitor/NF-kappa-B complex and ultimately the degradation of the inhibitor. Its binding to scaffolding polyubiquitin plays a key role in IKK activation by multiple signaling receptor pathways. Can recognize and bind both 'Lys-63'-linked and linear polyubiquitin upon cell stimulation, with a much higher affinity for linear polyubiquitin. Could be implicated in NF-kappa-B-mediated protection from cytokine toxicity. Essential for viral activation of IRF3. Involved in TLR3- and IFIH1-mediated antiviral innate response; this function requires 'Lys-27'-linked polyubiquitination. Functionally, (Microbial infection) Also considered to be a mediator for HTLV-1 Tax oncoprotein activation of NF-kappa-B. The protein is NF-kappa-B essential modulator of Homo sapiens (Human).